A 638-amino-acid polypeptide reads, in one-letter code: Threonine--tRNA ligase (638 aa).

The 61-residue stretch at 1-61 folds into the TGS domain; sequence MPEITLPDGS…DNDSKVVIIT (61 aa). The tract at residues 242 to 533 is catalytic; sequence DHRKLGKKHS…LIEQYEAKFP (292 aa). Zn(2+)-binding residues include cysteine 333, histidine 384, and histidine 510.

The protein belongs to the class-II aminoacyl-tRNA synthetase family. In terms of assembly, homodimer. Zn(2+) serves as cofactor.

It is found in the cytoplasm. It carries out the reaction tRNA(Thr) + L-threonine + ATP = L-threonyl-tRNA(Thr) + AMP + diphosphate + H(+). Its function is as follows. Catalyzes the attachment of threonine to tRNA(Thr) in a two-step reaction: L-threonine is first activated by ATP to form Thr-AMP and then transferred to the acceptor end of tRNA(Thr). Also edits incorrectly charged L-seryl-tRNA(Thr). The polypeptide is Threonine--tRNA ligase (Prochlorococcus marinus subsp. pastoris (strain CCMP1986 / NIES-2087 / MED4)).